The following is a 408-amino-acid chain: Succinylornithine transaminase (408 aa).

Position 252 is an N6-(pyridoxal phosphate)lysine (Lys252).

This sequence belongs to the class-III pyridoxal-phosphate-dependent aminotransferase family. AstC subfamily. Requires pyridoxal 5'-phosphate as cofactor.

The enzyme catalyses N(2)-succinyl-L-ornithine + 2-oxoglutarate = N-succinyl-L-glutamate 5-semialdehyde + L-glutamate. It functions in the pathway amino-acid degradation; L-arginine degradation via AST pathway; L-glutamate and succinate from L-arginine: step 3/5. Catalyzes the transamination of N(2)-succinylornithine and alpha-ketoglutarate into N(2)-succinylglutamate semialdehyde and glutamate. Can also act as an acetylornithine aminotransferase. The polypeptide is Succinylornithine transaminase (Salmonella typhimurium (strain LT2 / SGSC1412 / ATCC 700720)).